The sequence spans 121 residues: Large ribosomal subunit protein bL20 (121 aa).

The protein belongs to the bacterial ribosomal protein bL20 family.

Its function is as follows. Binds directly to 23S ribosomal RNA and is necessary for the in vitro assembly process of the 50S ribosomal subunit. It is not involved in the protein synthesizing functions of that subunit. This Koribacter versatilis (strain Ellin345) protein is Large ribosomal subunit protein bL20.